The primary structure comprises 446 residues: tRNA-2-methylthio-N(6)-dimethylallyladenosine synthase (446 aa).

Residues 2 to 122 (KKAYVKSYGC…LPDLLRQSRE (121 aa)) form the MTTase N-terminal domain. The [4Fe-4S] cluster site is built by Cys-11, Cys-47, Cys-85, Cys-157, Cys-161, and Cys-164. In terms of domain architecture, Radical SAM core spans 143–375 (RNRGVTGFLT…QDLLDRQRHA (233 aa)). Residues 378–440 (AASVGTLTEI…SNSLFGEALE (63 aa)) form the TRAM domain.

Belongs to the methylthiotransferase family. MiaB subfamily. Monomer. The cofactor is [4Fe-4S] cluster.

Its subcellular location is the cytoplasm. It carries out the reaction N(6)-dimethylallyladenosine(37) in tRNA + (sulfur carrier)-SH + AH2 + 2 S-adenosyl-L-methionine = 2-methylsulfanyl-N(6)-dimethylallyladenosine(37) in tRNA + (sulfur carrier)-H + 5'-deoxyadenosine + L-methionine + A + S-adenosyl-L-homocysteine + 2 H(+). Functionally, catalyzes the methylthiolation of N6-(dimethylallyl)adenosine (i(6)A), leading to the formation of 2-methylthio-N6-(dimethylallyl)adenosine (ms(2)i(6)A) at position 37 in tRNAs that read codons beginning with uridine. The chain is tRNA-2-methylthio-N(6)-dimethylallyladenosine synthase from Methylorubrum extorquens (strain CM4 / NCIMB 13688) (Methylobacterium extorquens).